The chain runs to 236 residues: Small ribosomal subunit protein uS3 (236 aa).

The region spanning 39 to 107 is the KH type-2 domain; sequence IREFLTEELK…DTSLNIVEVR (69 aa). The interval 214-236 is disordered; it reads ASERRAVEGDNQGSSSNRRRENA.

This sequence belongs to the universal ribosomal protein uS3 family. Part of the 30S ribosomal subunit. Forms a tight complex with proteins S10 and S14.

In terms of biological role, binds the lower part of the 30S subunit head. Binds mRNA in the 70S ribosome, positioning it for translation. The polypeptide is Small ribosomal subunit protein uS3 (Brucella abortus (strain S19)).